Consider the following 78-residue polypeptide: Short neurotoxin SNTX26 (78 aa).

The N-terminal stretch at 1–21 is a signal peptide; sequence MKTLLLTFLVVTIVCLDLGYT. 4 cysteine pairs are disulfide-bonded: C24/C40, C33/C58, C62/C70, and C71/C76.

The protein belongs to the three-finger toxin family. Short-chain subfamily. As to expression, expressed by the venom gland.

It is found in the secreted. In terms of biological role, this three-finger toxin binds and inhibits the nicotinic acetylcholine receptor (nAChR). This Ophiophagus hannah (King cobra) protein is Short neurotoxin SNTX26.